The sequence spans 884 residues: Blastomere cadherin (884 aa).

Residues 1–26 (MGGTDKFRYPSVWLCGLLCLLQVVPS) form the signal peptide. A propeptide spanning residues 27 to 157 (INVDVSGCQP…KHTGLKRKKR (131 aa)) is cleaved from the precursor. Cadherin domains are found at residues 158-265 (DWVI…RPKF), 266-378 (TQPV…APIF), 379-489 (DPKT…APVF), 490-595 (VPVV…DNGP), and 596-706 (VPSP…GFDL). The Extracellular portion of the chain corresponds to 158 to 706 (DWVIPPIKVS…QEKLVAGFDL (549 aa)). N-linked (GlcNAc...) asparagine glycans are attached at residues N427, N560, and N683. A helical transmembrane segment spans residues 707–730 (PIILVILGSILALLILSLLLLLFL). Over 731-884 (KRKKVVKEPL…YGGDDDDDEE (154 aa)) the chain is Cytoplasmic.

In terms of tissue distribution, expressed in pituitary gland, lung and kidney.

It localises to the cell membrane. Functionally, cadherins are calcium-dependent cell adhesion proteins. They preferentially interact with themselves in a homophilic manner in connecting cells; cadherins may thus contribute to the sorting of heterogeneous cell types. The protein is Blastomere cadherin of Xenopus laevis (African clawed frog).